The chain runs to 109 residues: Ig kappa chain V region S211 (109 aa).

A framework-1 region spans residues 1 to 23; sequence DVQMTQSPSYLAASPGESVSISC. The complementarity-determining-1 stretch occupies residues 24–35; it reads KASNKSISNNLA. The framework-2 stretch occupies residues 36-50; the sequence is WYZZKPGKANKLLIS. The interval 51-57 is complementarity-determining-2; the sequence is SGSTLQS. A framework-3 region spans residues 58–89; sequence GTPSRFSGSGSDTDFTLTIRSLEFQDFAVYYC. Positions 90 to 98 are complementarity-determining-3; sequence ZZYNEPYYT. Residues 99-108 form a framework-4 region; it reads FGAGTMLELK.

The chain is Ig kappa chain V region S211 from Rattus norvegicus (Rat).